Reading from the N-terminus, the 227-residue chain is Isopentenyl-diphosphate Delta-isomerase 1 (227 aa).

Position 36 (K36) interacts with substrate. Residues H40 and H51 each coordinate Mg(2+). One can recognise a Nudix hydrolase domain in the interval L49–I199. Substrate is bound by residues R70 and K74. The active site involves C86. Residue S87 coordinates substrate. Mg(2+) contacts are provided by E146 and E148. The active site involves E148. K176 carries the post-translational modification N6-acetyllysine. The Microbody targeting signal signature appears at Y225–M227.

This sequence belongs to the IPP isomerase type 1 family. In terms of assembly, monomer. It depends on Mg(2+) as a cofactor.

The protein localises to the peroxisome. It carries out the reaction isopentenyl diphosphate = dimethylallyl diphosphate. It functions in the pathway isoprenoid biosynthesis; dimethylallyl diphosphate biosynthesis; dimethylallyl diphosphate from isopentenyl diphosphate: step 1/1. Its function is as follows. Catalyzes the 1,3-allylic rearrangement of the homoallylic substrate isopentenyl (IPP) to its highly electrophilic allylic isomer, dimethylallyl diphosphate (DMAPP). This is Isopentenyl-diphosphate Delta-isomerase 1 (IDI1) from Homo sapiens (Human).